The primary structure comprises 128 residues: Thor profilin (128 aa).

Belongs to the Asgard profilin family.

Its subcellular location is the cytoplasm. It localises to the cytoskeleton. In terms of biological role, has no profilin activity against rabbit actin. The protein is Thor profilin of Thorarchaeota archaeon (strain AB_25).